Here is a 744-residue protein sequence, read N- to C-terminus: Prestin (744 aa).

At 1-75 (MDHAEENEIP…PITKWLPAYK (75 aa)) the chain is on the cytoplasmic side. Residues 76–105 (FKEYVLGDLVSGISTGVLQLPQGLAFAMLA) form a helical membrane-spanning segment. Over 106–108 (AVP) the chain is Extracellular. The chain crosses the membrane as a helical span at residues 109–126 (PVFGLYSSFYPVIMYCFF). Residues 127-137 (GTSRHISIGPF) lie on the Cytoplasmic side of the membrane. Residues 138-151 (AVISLMIGGVAVRL) form a helical membrane-spanning segment. Residues 152-168 (VPDDIVIPGGVNATNGT) lie on the Extracellular side of the membrane. Residues 158 to 168 (IPGGVNATNGT) carry the Involved in motor function motif. 2 N-linked (GlcNAc...) asparagine glycosylation sites follow: N163 and N166. A helical transmembrane segment spans residues 169 to 196 (EARDALRVKVAMSVTLLSGIIQFCLGVC). Topologically, residues 197 to 206 (RFGFVAIYLT) are cytoplasmic. Residues 207 to 230 (EPLVRGFTTAAAVHVFTSMLKYLF) form a helical membrane-spanning segment. At 231–241 (GVKTKRYSGIF) the chain is on the extracellular side. An intramembrane region (helical) is located at residues 242-253 (SVVYSTVAVLQN). The Extracellular portion of the chain corresponds to 254–258 (VKNLN). A helical transmembrane segment spans residues 259–282 (VCSLGVGLMVFGLLLGGKEFNERF). The Cytoplasmic portion of the chain corresponds to 283 to 291 (KEKLPAPIP). A helical membrane pass occupies residues 292–307 (LEFFAVVMGTGISAGF). Residues 308–332 (NLHESYSVDVVGTLPLGLLPPANPD) lie on the Extracellular side of the membrane. Residues 333–367 (TSLFHLVYVDAIAIAIVGFSVTISMAKTLANKHGY) form a helical membrane-spanning segment. Over 368–370 (QVD) the chain is Cytoplasmic. A helical membrane pass occupies residues 371 to 388 (GNQELIALGICNSIGSLF). Residues 389–396 (QTFSISCS) are Extracellular-facing. The helical transmembrane segment at 397-406 (LSRSLVQEGT) threads the bilayer. Position 398 (S398) interacts with salicylate. The Cytoplasmic portion of the chain corresponds to 407–410 (GGKT). The helical transmembrane segment at 411–432 (QLAGCLASLMILLVILATGFLF) threads the bilayer. Topologically, residues 433-436 (ESLP) are extracellular. Residues 437–464 (QAVLSAIVIVNLKGMFMQFSDLPFFWRT) form a helical membrane-spanning segment. A topological domain (cytoplasmic) is located at residue S465. Residues 466–481 (KIELTIWLTTFVSSLF) form a helical membrane-spanning segment. The Extracellular segment spans residues 482-483 (LG). Residues 484 to 504 (LDYGLITAVIIALLTVIYRTQ) traverse the membrane as a helical segment. The tract at residues 505–718 (SPSYKVLGQL…AVLGSQVREA (214 aa)) is extended region for STAS domain. The Cytoplasmic segment spans residues 505–744 (SPSYKVLGQL…PNATPTTPEA (240 aa)). The region spanning 525 to 713 (AYEEVKEIPG…HSIHDAVLGS (189 aa)) is the STAS domain. The segment at 720–744 (AEQEATASLPQEDMEPNATPTTPEA) is disordered.

It belongs to the SLC26A/SulP transporter (TC 2.A.53) family. In terms of assembly, homodimer. Interacts (via STAS domain) with CALM; this interaction is calcium-dependent and the STAS domain interacts with only one lobe of CALM which is an elongated conformation. Interacts with MYH1. In terms of tissue distribution, expressed in the outer hair cells (OHC) of the organ of Corti of the inner ear. Also weak expression in brain and testis. Very weakly expressed in heart, spleen, muscle and lactating mammary glands. Expressed in cardiac myocytes (at protein level), both in the surface sarcolemma and along the t-tubule. Weakly expressed in skeletal muscle cells (at protein level).

Its subcellular location is the lateral cell membrane. It catalyses the reaction 2 hydrogencarbonate(in) + chloride(out) = 2 hydrogencarbonate(out) + chloride(in). In terms of biological role, voltage-sensitive motor protein that drives outer hair cell (OHC) electromotility (eM) and participates in sound amplification in the hearing organ. Converts changes in the transmembrane electric potential into mechanical displacements resulting in the coupling of its expansion to movement of a charged voltage sensor across the lipid membrane. The nature of the voltage sensor is not completely clear, and two models compete. In the first model, acts as an incomplete transporter where intracellular chloride anion acts as extrinsic voltage sensor that drives conformational change in the protein which is sufficient to produce a length change in the plane of the membrane and hence in the length of the OHC. The second model in which multiple charged amino acid residues are distributed at the intracellular and extracellular membrane interfaces that form an intrinsic voltage sensor, whose movement produces the non-linear capacitance (NLC). However, the effective voltage sensor may be the result of a hybrid voltage sensor, assembled from intrinsic charge (charged residues) and extrinsic charge (bound anion). Notably, binding of anions to the anion-binding pocket partially neutralizes the intrinsic positive charge rather than to form an electrically negative sensor, therefore remaining charge may serve as voltage sensor that, after depolarization, moves from down (expanded state) to up (contracted) conformation, which is accompanied by an eccentric contraction of the intermembrane cross-sectional area of the protein as well as a major increase in the hydrophobic thickness of the protein having as consequences the plasma membrane thickening and the cell contraction after membrane depolarization. The anion-binding pocket transits from the inward-open (Down) state, where it is exposed toward the intracellular solvent in the absence of anion, to the occluded (Up) state upon anion binding. Salicylate competes for the anion-binding site and inhibits the voltage-sensor movement, and therefore inhibits the charge transfer and electromotility by displacing Cl(-) from the anion-binding site and by preventing the structural transitions to the contracted state. In addition, can act as a weak Cl(-)/HCO3(-) antiporter across the cell membrane and so regulate the intracellular pH of the outer hair cells (OHCs), while firstly found as being unable to mediate electrogenic anion transport. Moreover, supports a role in cardiac mechanical amplification serving as an elastic element to enhance the actomyosin- based sarcomere contraction system. The chain is Prestin from Mus musculus (Mouse).